The primary structure comprises 198 residues: uncharacterized protein (198 aa).

The stretch at 20–58 (ERVRRDEELARLSADKEQAKNDLEESKRRIARLRGTVYE) forms a coiled coil. Residues 144-198 (LSNRKTKNPESDRRRQSRKKKSTQIQASDEMKHRRHHVHKVHHYSQKQSSSTTRR) are disordered. A compositionally biased stretch (basic residues) spans 176–188 (HRRHHVHKVHHYS). A compositionally biased stretch (polar residues) spans 189-198 (QKQSSSTTRR).

The protein resides in the nucleus. The protein localises to the nucleolus. This is an uncharacterized protein from Schizosaccharomyces pombe (strain 972 / ATCC 24843) (Fission yeast).